A 314-amino-acid polypeptide reads, in one-letter code: Olfactory receptor 5I1 (314 aa).

The Extracellular segment spans residues 1-27; that stretch reads MEFTDRNYTLVTEFILLGFPTRPELQI. An N-linked (GlcNAc...) asparagine glycan is attached at asparagine 7. A helical transmembrane segment spans residues 28-48; it reads VLFLMFLTLYAIILIGNIGLM. The Cytoplasmic segment spans residues 49–56; the sequence is LLIRIDPH. A helical transmembrane segment spans residues 57–77; that stretch reads LQTPMYFFLSNLSFVDLCYFS. Over 78 to 101 the chain is Extracellular; it reads DIVPKMLVNFLSENKSISYYGCAL. Cysteine 99 and cysteine 191 are joined by a disulfide. The chain crosses the membrane as a helical span at residues 102-122; the sequence is QFYFFCTFADTESFILAAMAY. Over 123-141 the chain is Cytoplasmic; it reads DRYVAICNPLLYTVVMSRG. Residues 142 to 162 form a helical membrane-spanning segment; it reads ICMRLIVLSYLGGNMSSLVHT. The Extracellular segment spans residues 163–198; the sequence is SFAFILKYCDKNVINHFFCDLPPLLKLSCTDTTINE. Residues 199 to 219 traverse the membrane as a helical segment; sequence WLLSTYGSSVEIICFIIIIIS. Residues 220–239 lie on the Cytoplasmic side of the membrane; the sequence is YFFILLSVLKIRSFSGRKKT. Residues 240 to 260 traverse the membrane as a helical segment; it reads FSTCASHLTSVTIYQGTLLFI. Over 261–273 the chain is Extracellular; it reads YSRPSYLYSPNTD. Residues 274–294 form a helical membrane-spanning segment; that stretch reads KIISVFYTIFIPVLNPLIYSL. At 295–314 the chain is on the cytoplasmic side; the sequence is RNKDVKDAAEKVLRSKVDSS.

The protein belongs to the G-protein coupled receptor 1 family.

The protein localises to the cell membrane. Functionally, odorant receptor. The chain is Olfactory receptor 5I1 (OR5I1) from Homo sapiens (Human).